Consider the following 214-residue polypeptide: A-type ATP synthase subunit D (214 aa).

This sequence belongs to the V-ATPase D subunit family. In terms of assembly, has multiple subunits with at least A(3), B(3), C, D, E, F, H, I and proteolipid K(x).

Its subcellular location is the cell membrane. Functionally, component of the A-type ATP synthase that produces ATP from ADP in the presence of a proton gradient across the membrane. The polypeptide is A-type ATP synthase subunit D (Desulfurococcus sp. (strain SY)).